The following is a 1010-amino-acid chain: Importin-8 (1010 aa).

The 81-residue stretch at 22 to 102 folds into the Importin N-terminal domain; the sequence is AETELNQSYK…RDNIVEGIIR (81 aa). Residues 886–895 show a composition bias toward basic and acidic residues; the sequence is NHSKAEKVDI. Positions 886–932 are disordered; that stretch reads NHSKAEKVDIEENEEISSEEEEETSVSAQAMQSQIGRSEEEDDDDWD. The span at 896 to 909 shows a compositional bias: acidic residues; that stretch reads EENEEISSEEEEET. Residues Ser-902 and Ser-903 each carry the phosphoserine modification. The span at 910–921 shows a compositional bias: polar residues; the sequence is SVSAQAMQSQIG.

This sequence belongs to the importin beta family. Forms a heterodimer with KPNB1. Interacts with SRP19. Interacts with RPL23A. Binds directly to nuclear pore complexes. Interacts with LRPPRC; the interaction occurs when LRPPRC is in its RNA-free form and promotes import of LRPPRC to the nucleus to allow for EIF4E-mediated export of mRNAS from the nucleus to the cytoplasm.

Its subcellular location is the cytoplasm. It is found in the nucleus. In terms of biological role, involved in nuclear protein import, either by acting as autonomous nuclear transport receptor or as an adapter-like protein in association with the importin-beta subunit KPNB1. Acting autonomously, may serve as receptor for nuclear localization signals (NLS) and promote translocation of import substrates through the nuclear pore complex (NPC) by an energy requiring, Ran-dependent mechanism. At the nucleoplasmic side of the NPC, Ran binds to importin, the importin/substrate complex dissociates and importin is re-exported from the nucleus to the cytoplasm where GTP hydrolysis releases Ran. The directionality of nuclear import is thought to be conferred by an asymmetric distribution of the GTP- and GDP-bound forms of Ran between the cytoplasm and nucleus. In vitro mediates the nuclear import of the signal recognition particle protein SRP19. May also be involved in cytoplasm-to-nucleus shuttling of a broad spectrum of other cargos, including Argonaute-microRNAs complexes, the JUN protein, RELA/NF-kappa-B p65 subunit, the translation initiation factor EIF4E and a set of receptor-activated mothers against decapentaplegic homolog (SMAD) transcription factors that play a critical role downstream of the large family of transforming growth factor beta and bone morphogenetic protein (BMP) cytokines. The chain is Importin-8 from Mus musculus (Mouse).